We begin with the raw amino-acid sequence, 597 residues long: Alkyldihydroxyacetonephosphate synthase (597 aa).

The FAD-binding PCMH-type domain occupies 131–313; the sequence is IPRLPDIVVW…SEVTIKIFPI (183 aa). Residues 163 to 169, 232 to 238, 245 to 248, and 297 to 303 each bind FAD; these read PIGGGTS, DSIEFST, TRAS, and EGTLGVV. Arg444 contributes to the substrate binding site. Residue Tyr507 is the Proton donor/acceptor of the active site. The interval 544–546 is important for enzyme activity; sequence HHH. A Microbody targeting signal motif is present at residues 595–597; the sequence is CKL.

It belongs to the FAD-binding oxidoreductase/transferase type 4 family. As to quaternary structure, homodimer. FAD is required as a cofactor.

Its subcellular location is the peroxisome. It carries out the reaction a long chain fatty alcohol + a 1-acylglycerone 3-phosphate = a 1-O-alkylglycerone 3-phosphate + a long-chain fatty acid + H(+). The protein operates within glycerolipid metabolism; ether lipid biosynthesis. In terms of biological role, catalyzes the exchange of an acyl for a long-chain alkyl group and the formation of the ether bond in the biosynthesis of ether phospholipids. This chain is Alkyldihydroxyacetonephosphate synthase (ads-1), found in Caenorhabditis elegans.